Consider the following 251-residue polypeptide: Aquaporin (251 aa).

Topologically, residues 1–11 (MAKEALKTLQS) are cytoplasmic. A helical membrane pass occupies residues 12 to 32 (MFGEMVASFVFGFAVYSAILG). The Extracellular portion of the chain corresponds to 33-42 (SSISQSSADK). The helical transmembrane segment at 43–63 (VIVGLTVGFSGIGVIYSFCDV) threads the bilayer. At 64-86 (TIAHFNPAITLAAILTSKIDVLQ) the chain is on the cytoplasmic side. Residues 69 to 71 (NPA) carry the NPA motif. The chain crosses the membrane as a helical span at residues 87-107 (GLGYMLAQYIGFMLAVCALLV). Residues 108–133 (CSPVEYKETLDTIRPGPTDFGATSLN) are Extracellular-facing. The chain crosses the membrane as a helical span at residues 134–154 (VFFAEFFLTAIFVHIVFATAV). Residues 155–179 (NPYKPKVDTEGKFVDPDEKEPVDRR) lie on the Cytoplasmic side of the membrane. The helical transmembrane segment at 180–200 (ITAPLCIGLTLGFLAFMGLAS) threads the bilayer. Residues 201-224 (SGGAFNPGLTFAPMAMSNTWSHFW) lie on the Extracellular side of the membrane. An NPG motif is present at residues 206 to 208 (NPG). The helical transmembrane segment at 225-245 (IYLGGQYLGGLTGGLLQVLVL) threads the bilayer. The Cytoplasmic portion of the chain corresponds to 246 to 251 (YKLSSD).

It belongs to the MIP/aquaporin (TC 1.A.8) family.

It is found in the cell membrane. Functionally, water channel required to facilitate the transport of water across membranes. Involved in osmotolerance. This is Aquaporin (AQP) from Encephalitozoon intestinalis (Microsporidian parasite).